The primary structure comprises 877 residues: Alanine--tRNA ligase (877 aa).

Zn(2+) contacts are provided by H565, H569, C667, and H671.

This sequence belongs to the class-II aminoacyl-tRNA synthetase family. It depends on Zn(2+) as a cofactor.

The protein localises to the cytoplasm. It catalyses the reaction tRNA(Ala) + L-alanine + ATP = L-alanyl-tRNA(Ala) + AMP + diphosphate. Catalyzes the attachment of alanine to tRNA(Ala) in a two-step reaction: alanine is first activated by ATP to form Ala-AMP and then transferred to the acceptor end of tRNA(Ala). Also edits incorrectly charged Ser-tRNA(Ala) and Gly-tRNA(Ala) via its editing domain. The chain is Alanine--tRNA ligase from Acidithiobacillus ferridurans.